We begin with the raw amino-acid sequence, 433 residues long: Homogentisate 1,2-dioxygenase (433 aa).

The active-site Proton acceptor is the His-288. Fe cation is bound by residues His-331 and Glu-337. Residues Tyr-346 and His-367 each coordinate homogentisate. His-367 serves as a coordination point for Fe cation.

The protein belongs to the homogentisate dioxygenase family. In terms of assembly, hexamer; dimer of trimers. The cofactor is Fe cation.

The catalysed reaction is homogentisate + O2 = 4-maleylacetoacetate + H(+). The protein operates within amino-acid degradation; L-phenylalanine degradation; acetoacetate and fumarate from L-phenylalanine: step 4/6. Its function is as follows. Involved in the catabolism of homogentisate (2,5-dihydroxyphenylacetate or 2,5-OH-PhAc), a central intermediate in the degradation of phenylalanine and tyrosine. Catalyzes the oxidative ring cleavage of the aromatic ring of homogentisate to yield maleylacetoacetate. This is Homogentisate 1,2-dioxygenase from Pseudomonas putida (strain ATCC 700007 / DSM 6899 / JCM 31910 / BCRC 17059 / LMG 24140 / F1).